We begin with the raw amino-acid sequence, 138 residues long: Integration host factor subunit beta (138 aa).

The span at 81-98 (KAGKELRERVDRSLERQG) shows a compositional bias: basic and acidic residues. Residues 81-138 (KAGKELRERVDRSLERQGDSSSEGEPVSLTAVKAARQAGGHHAAGFPAEATPTLVMSR) are disordered.

The protein belongs to the bacterial histone-like protein family. As to quaternary structure, heterodimer of an alpha and a beta chain.

Functionally, this protein is one of the two subunits of integration host factor, a specific DNA-binding protein that functions in genetic recombination as well as in transcriptional and translational control. This chain is Integration host factor subunit beta, found in Ralstonia nicotianae (strain ATCC BAA-1114 / GMI1000) (Ralstonia solanacearum).